Reading from the N-terminus, the 280-residue chain is Large ribosomal subunit protein uL2 (280 aa).

Disordered regions lie at residues 1 to 25 and 230 to 280; these read MGIR…AEVT and HPHG…SGRG. Positions 257-280 are enriched in basic residues; the sequence is KTRKRRKPSSKFIIRRRKTASGRG.

It belongs to the universal ribosomal protein uL2 family. In terms of assembly, part of the 50S ribosomal subunit. Forms a bridge to the 30S subunit in the 70S ribosome.

Its function is as follows. One of the primary rRNA binding proteins. Required for association of the 30S and 50S subunits to form the 70S ribosome, for tRNA binding and peptide bond formation. It has been suggested to have peptidyltransferase activity; this is somewhat controversial. Makes several contacts with the 16S rRNA in the 70S ribosome. The sequence is that of Large ribosomal subunit protein uL2 from Gloeobacter violaceus (strain ATCC 29082 / PCC 7421).